The sequence spans 64 residues: Large ribosomal subunit protein bL35 (64 aa).

The segment at 1–27 (MPKMKTKSGAKKRFKPTASGFKHKHAF) is disordered.

The protein belongs to the bacterial ribosomal protein bL35 family.

The chain is Large ribosomal subunit protein bL35 from Azotobacter vinelandii (strain DJ / ATCC BAA-1303).